A 199-amino-acid polypeptide reads, in one-letter code: Recombination protein RecR (199 aa).

Residues 57 to 72 form a C4-type zinc finger; sequence CSSCRTFTEESLCPIC. One can recognise a Toprim domain in the interval 81–176; sequence DLICVVETPA…NVSRIAHGVP (96 aa).

It belongs to the RecR family.

Its function is as follows. May play a role in DNA repair. It seems to be involved in an RecBC-independent recombinational process of DNA repair. It may act with RecF and RecO. The protein is Recombination protein RecR of Shewanella loihica (strain ATCC BAA-1088 / PV-4).